A 97-amino-acid polypeptide reads, in one-letter code: Large ribosomal subunit protein bL21 (97 aa).

It belongs to the bacterial ribosomal protein bL21 family. In terms of assembly, part of the 50S ribosomal subunit. Contacts protein L20.

Its function is as follows. This protein binds to 23S rRNA in the presence of protein L20. This Persephonella marina (strain DSM 14350 / EX-H1) protein is Large ribosomal subunit protein bL21.